Here is a 316-residue protein sequence, read N- to C-terminus: Porphobilinogen deaminase (316 aa).

Cys240 carries the post-translational modification S-(dipyrrolylmethanemethyl)cysteine.

The protein belongs to the HMBS family. In terms of assembly, monomer. It depends on dipyrromethane as a cofactor.

It catalyses the reaction 4 porphobilinogen + H2O = hydroxymethylbilane + 4 NH4(+). Its pathway is porphyrin-containing compound metabolism; protoporphyrin-IX biosynthesis; coproporphyrinogen-III from 5-aminolevulinate: step 2/4. Tetrapolymerization of the monopyrrole PBG into the hydroxymethylbilane pre-uroporphyrinogen in several discrete steps. The chain is Porphobilinogen deaminase from Alkaliphilus metalliredigens (strain QYMF).